We begin with the raw amino-acid sequence, 345 residues long: Hydroxymethylglutaryl-CoA synthase (345 aa).

Asp-28 serves as a coordination point for (3S)-3-hydroxy-3-methylglutaryl-CoA. Residue Glu-80 is the Proton donor/acceptor of the active site. Positions 112 and 153 each coordinate (3S)-3-hydroxy-3-methylglutaryl-CoA. The active-site Acyl-thioester intermediate is Cys-112. CoA is bound at residue Arg-199. (3S)-3-hydroxy-3-methylglutaryl-CoA-binding residues include Thr-201 and His-234. Residue His-234 is the Proton donor/acceptor of the active site. Lys-239 contributes to the CoA binding site. Positions 243, 266, and 296 each coordinate (3S)-3-hydroxy-3-methylglutaryl-CoA.

The protein belongs to the thiolase-like superfamily. Archaeal HMG-CoA synthase family. Interacts with acetoacetyl-CoA thiolase that catalyzes the precedent step in the pathway and with a DUF35 protein. The acetoacetyl-CoA thiolase/HMG-CoA synthase complex channels the intermediate via a fused CoA-binding site, which allows for efficient coupling of the endergonic thiolase reaction with the exergonic HMGCS reaction.

It carries out the reaction acetoacetyl-CoA + acetyl-CoA + H2O = (3S)-3-hydroxy-3-methylglutaryl-CoA + CoA + H(+). It participates in metabolic intermediate biosynthesis; (R)-mevalonate biosynthesis; (R)-mevalonate from acetyl-CoA: step 2/3. Functionally, catalyzes the condensation of acetyl-CoA with acetoacetyl-CoA to form 3-hydroxy-3-methylglutaryl-CoA (HMG-CoA). Functions in the mevalonate (MVA) pathway leading to isopentenyl diphosphate (IPP), a key precursor for the biosynthesis of isoprenoid compounds that are building blocks of archaeal membrane lipids. The sequence is that of Hydroxymethylglutaryl-CoA synthase from Methanocaldococcus jannaschii (strain ATCC 43067 / DSM 2661 / JAL-1 / JCM 10045 / NBRC 100440) (Methanococcus jannaschii).